We begin with the raw amino-acid sequence, 216 residues long: LexA repressor (216 aa).

The H-T-H motif DNA-binding region spans 28–48; sequence RAEIAAEFGFSSPNAAEEHLR. Residues S134 and K171 each act as for autocatalytic cleavage activity in the active site.

It belongs to the peptidase S24 family. Homodimer.

It carries out the reaction Hydrolysis of Ala-|-Gly bond in repressor LexA.. Represses a number of genes involved in the response to DNA damage (SOS response), including recA and lexA. In the presence of single-stranded DNA, RecA interacts with LexA causing an autocatalytic cleavage which disrupts the DNA-binding part of LexA, leading to derepression of the SOS regulon and eventually DNA repair. The sequence is that of LexA repressor from Ralstonia pickettii (strain 12J).